Reading from the N-terminus, the 246-residue chain is Uridylate kinase (246 aa).

Residue Lys-13–Gly-16 coordinates ATP. Gly-54 is a binding site for UMP. Residues Gly-55 and Arg-59 each contribute to the ATP site. Residues Asp-74 and Ala-135–Thr-142 each bind UMP. ATP is bound by residues Asn-163, Tyr-169, and Asp-172.

Belongs to the UMP kinase family. In terms of assembly, homohexamer.

The protein resides in the cytoplasm. It carries out the reaction UMP + ATP = UDP + ADP. The protein operates within pyrimidine metabolism; CTP biosynthesis via de novo pathway; UDP from UMP (UMPK route): step 1/1. Inhibited by UTP. Its function is as follows. Catalyzes the reversible phosphorylation of UMP to UDP. The sequence is that of Uridylate kinase from Bifidobacterium longum (strain NCC 2705).